Here is a 217-residue protein sequence, read N- to C-terminus: Pyrrolidone-carboxylate peptidase (217 aa).

Catalysis depends on residues Glu78, Cys141, and His168.

This sequence belongs to the peptidase C15 family. In terms of assembly, homotetramer.

It is found in the cytoplasm. The enzyme catalyses Release of an N-terminal pyroglutamyl group from a polypeptide, the second amino acid generally not being Pro.. Functionally, removes 5-oxoproline from various penultimate amino acid residues except L-proline. The protein is Pyrrolidone-carboxylate peptidase of Treponema denticola (strain ATCC 35405 / DSM 14222 / CIP 103919 / JCM 8153 / KCTC 15104).